Here is a 313-residue protein sequence, read N- to C-terminus: Intelectin-1a (313 aa).

Residues 1–18 form the signal peptide; it reads MTQLGFLLFIMVATRGCS. One can recognise a Fibrinogen C-terminal domain in the interval 32–251; the sequence is SFFSSLPRSC…NNERAASALC (220 aa). Cysteine 41 and cysteine 70 are disulfide-bonded. Ca(2+) is bound by residues histidine 86, glutamate 87, asparagine 89, glycine 92, glycine 97, aspartate 98, and aspartate 133. 3 disulfide bridges follow: cysteine 94-cysteine 280, cysteine 199-cysteine 259, and cysteine 251-cysteine 265. Residues asparagine 260, glutamate 262, glutamate 274, and aspartate 282 each coordinate Ca(2+). Residues 262–263 and glutamate 274 contribute to the a carbohydrate site; that span reads EH. The GPI-anchor amidated serine moiety is linked to residue serine 298. Positions 299-313 are excised as a propeptide; that stretch reads SSRKITEAAVLLFYR.

As to quaternary structure, monomer. May interact with LTF. In terms of tissue distribution, expressed in small intestinal Paneth cells in uninfected mice. Expression also detected in various other tissues including stomach, kidney, ovary and brain.

The protein resides in the cell membrane. It localises to the secreted. Lectin that specifically recognizes microbial carbohydrate chains in a calcium-dependent manner. Binds to microbial glycans that contain a terminal acyclic 1,2-diol moiety, including beta-linked D-galactofuranose (beta-Galf), D-phosphoglycerol-modified glycans, D-glycero-D-talo-oct-2-ulosonic acid (KO) and 3-deoxy-D-manno-oct-2-ulosonic acid (KDO). Binds to glycans from Gram-positive and Gram-negative bacteria, including K.pneumoniae, S.pneumoniae, Y.pestis, P.mirabilis and P.vulgaris. Does not bind mammalian glycans. Probably plays a role in the defense system against microorganisms. May function as adipokine that has no effect on basal glucose uptake but enhances insulin-stimulated glucose uptake in adipocytes. Increases AKT phosphorylation in the absence and presence of insulin. May interact with lactoferrin/LTF and increase its uptake, and may thereby play a role in iron absorption. In Mus musculus (Mouse), this protein is Intelectin-1a (Itln1).